We begin with the raw amino-acid sequence, 491 residues long: UDP-N-acetylmuramate--L-alanine ligase (491 aa).

Residue G126–T132 participates in ATP binding.

The protein belongs to the MurCDEF family.

The protein resides in the cytoplasm. It catalyses the reaction UDP-N-acetyl-alpha-D-muramate + L-alanine + ATP = UDP-N-acetyl-alpha-D-muramoyl-L-alanine + ADP + phosphate + H(+). The protein operates within cell wall biogenesis; peptidoglycan biosynthesis. Cell wall formation. This chain is UDP-N-acetylmuramate--L-alanine ligase, found in Salmonella agona (strain SL483).